We begin with the raw amino-acid sequence, 207 residues long: Protein GrpE (207 aa).

The segment at 1–31 (MSEHQTPPEEDLTVANGDSAEAVSEPDVTVA) is disordered.

It belongs to the GrpE family. In terms of assembly, homodimer.

It localises to the cytoplasm. Functionally, participates actively in the response to hyperosmotic and heat shock by preventing the aggregation of stress-denatured proteins, in association with DnaK and GrpE. It is the nucleotide exchange factor for DnaK and may function as a thermosensor. Unfolded proteins bind initially to DnaJ; upon interaction with the DnaJ-bound protein, DnaK hydrolyzes its bound ATP, resulting in the formation of a stable complex. GrpE releases ADP from DnaK; ATP binding to DnaK triggers the release of the substrate protein, thus completing the reaction cycle. Several rounds of ATP-dependent interactions between DnaJ, DnaK and GrpE are required for fully efficient folding. This is Protein GrpE from Synechococcus elongatus (strain ATCC 33912 / PCC 7942 / FACHB-805) (Anacystis nidulans R2).